The following is a 314-amino-acid chain: Oxaloacetate tautomerase FAHD2B, mitochondrial (314 aa).

The N-terminal 84 residues, 1–84, are a transit peptide targeting the mitochondrion; sequence MLVSGRRRLL…ATLSVARRAL (84 aa). Mg(2+)-binding residues include E159, E161, and D190.

This sequence belongs to the FAH family. Mg(2+) serves as cofactor. The cofactor is Mn(2+).

It localises to the mitochondrion. It carries out the reaction oxaloacetate = enol-oxaloacetate. Its function is as follows. Tautomerase that converts enol-oxaloacetate, a strong inhibitor of succinate dehydrogenase, to the physiological keto form of oxaloacetate. It is thereby required to maximize aerobic respiration efficiency by preventing succinate dehydrogenase inhibition. This is Oxaloacetate tautomerase FAHD2B, mitochondrial from Homo sapiens (Human).